Here is a 136-residue protein sequence, read N- to C-terminus: Large ribosomal subunit protein bL20 (136 aa).

It belongs to the bacterial ribosomal protein bL20 family.

Its function is as follows. Binds directly to 23S ribosomal RNA and is necessary for the in vitro assembly process of the 50S ribosomal subunit. It is not involved in the protein synthesizing functions of that subunit. The polypeptide is Large ribosomal subunit protein bL20 (Tropheryma whipplei (strain TW08/27) (Whipple's bacillus)).